A 404-amino-acid chain; its full sequence is Tryptophan synthase beta chain (404 aa).

Lysine 95 is modified (N6-(pyridoxal phosphate)lysine).

Belongs to the TrpB family. As to quaternary structure, tetramer of two alpha and two beta chains. Pyridoxal 5'-phosphate is required as a cofactor.

The catalysed reaction is (1S,2R)-1-C-(indol-3-yl)glycerol 3-phosphate + L-serine = D-glyceraldehyde 3-phosphate + L-tryptophan + H2O. Its pathway is amino-acid biosynthesis; L-tryptophan biosynthesis; L-tryptophan from chorismate: step 5/5. Functionally, the beta subunit is responsible for the synthesis of L-tryptophan from indole and L-serine. This Thermus thermophilus (strain ATCC BAA-163 / DSM 7039 / HB27) protein is Tryptophan synthase beta chain (trpB).